The chain runs to 81 residues: Cytochrome b559 subunit alpha (81 aa).

2 residues coordinate heme: Arg-18 and His-23. The chain crosses the membrane as a helical span at residues 19–40 (YWVIHSITIPMLFIAGWLFVST).

The protein belongs to the PsbE/PsbF family. In terms of assembly, heterodimer of an alpha subunit and a beta subunit. PSII is composed of 1 copy each of membrane proteins PsbA, PsbB, PsbC, PsbD, PsbE, PsbF, PsbH, PsbI, PsbJ, PsbK, PsbL, PsbM, PsbT, PsbX, PsbY, PsbZ, Psb30/Ycf12, peripheral proteins PsbO, CyanoQ (PsbQ), PsbU, PsbV and a large number of cofactors. It forms dimeric complexes. Heme b serves as cofactor.

It localises to the cellular thylakoid membrane. Functionally, this b-type cytochrome is tightly associated with the reaction center of photosystem II (PSII). PSII is a light-driven water:plastoquinone oxidoreductase that uses light energy to abstract electrons from H(2)O, generating O(2) and a proton gradient subsequently used for ATP formation. It consists of a core antenna complex that captures photons, and an electron transfer chain that converts photonic excitation into a charge separation. The sequence is that of Cytochrome b559 subunit alpha from Synechocystis sp. (strain ATCC 27184 / PCC 6803 / Kazusa).